The following is a 562-amino-acid chain: Terpene synthase 2 (562 aa).

The Mg(2+) site is built by D315, D319, D459, and E467. Residues 315-319 (DDEYD) carry the DDXXD motif motif.

The protein belongs to the terpene synthase family. Tpsa subfamily. It depends on Mg(2+) as a cofactor. Mn(2+) is required as a cofactor. As to expression, expressed at low levels in stems, leaves, roots and fruits.

It catalyses the reaction (2E,6E)-farnesyl diphosphate = delta-cadinene + diphosphate. The catalysed reaction is (2E,6E)-farnesyl diphosphate = alpha-cadinene + diphosphate. It carries out the reaction (2E,6E)-farnesyl diphosphate + H2O = (-)-delta-cadinol + diphosphate. The protein operates within secondary metabolite biosynthesis; terpenoid biosynthesis. Functionally, sesquiterpene synthase involved in the biosynthesis of volatile compounds that contribute to the characteristic flavors of black pepper. Mediates the conversion of (2E,6E)-farnesyl diphosphate (FPP) into alpha-cadinene, delta-cadinene and delta-cadinol. This chain is Terpene synthase 2, found in Piper nigrum (Black pepper).